The sequence spans 151 residues: Glycosylation-dependent cell adhesion molecule 1 (151 aa).

Positions 1–19 are cleaved as a signal peptide; the sequence is MKFFTVLLFVSLAATSLAL. A disordered region spans residues 29-123; the sequence is MKTQPTDAIP…ENLTKSSQTV (95 aa). The span at 42–52 shows a compositional bias: low complexity; sequence STPTSYTSEES. Residues 53 to 71 show a composition bias toward basic and acidic residues; that stretch reads TSSKDLSKEPSIFREELIS. Ser54, Ser59, Ser63, and Ser71 each carry phosphoserine. The segment covering 103–114 has biased composition (low complexity); the sequence is RPTTSAATTSEE. An N-linked (GlcNAc...) asparagine glycan is attached at Asn115.

This sequence belongs to the PP3/GlyCAM-1 family. Post-translationally, extensively O-glycosylated. As to expression, lymph nodes. Associated with the lumenal surface of the high endothelial venules of peripheral lymph nodes.

It localises to the cell membrane. Its function is as follows. Adhesion molecule that accomplishes cell binding by presenting carbohydrate(s) to the lectin domain of L-selectin. The protein is Glycosylation-dependent cell adhesion molecule 1 (Glycam1) of Mus musculus (Mouse).